The primary structure comprises 435 residues: NADH-quinone oxidoreductase subunit D (435 aa).

Belongs to the complex I 49 kDa subunit family. As to quaternary structure, NDH-1 is composed of 14 different subunits. Subunits NuoB, C, D, E, F, and G constitute the peripheral sector of the complex.

The protein resides in the cell inner membrane. It carries out the reaction a quinone + NADH + 5 H(+)(in) = a quinol + NAD(+) + 4 H(+)(out). In terms of biological role, NDH-1 shuttles electrons from NADH, via FMN and iron-sulfur (Fe-S) centers, to quinones in the respiratory chain. The immediate electron acceptor for the enzyme in this species is believed to be ubiquinone. Couples the redox reaction to proton translocation (for every two electrons transferred, four hydrogen ions are translocated across the cytoplasmic membrane), and thus conserves the redox energy in a proton gradient. This is NADH-quinone oxidoreductase subunit D from Xylella fastidiosa (strain M23).